Consider the following 554-residue polypeptide: 3-(3-hydroxy-phenyl)propionate/3-hydroxycinnamic acid hydroxylase (554 aa).

Residues 17 to 46 and 285 to 295 each bind FAD; these read QVAIVGAGPVGLMMANYLGQMGISVLVVEK and FRINRVLLAGD.

It belongs to the PheA/TfdB FAD monooxygenase family. FAD serves as cofactor.

The enzyme catalyses 3-(3-hydroxyphenyl)propanoate + NADH + O2 + H(+) = 3-(2,3-dihydroxyphenyl)propanoate + NAD(+) + H2O. It catalyses the reaction (2E)-3-(3-hydroxyphenyl)prop-2-enoate + NADH + O2 + H(+) = (2E)-3-(2,3-dihydroxyphenyl)prop-2-enoate + NAD(+) + H2O. The protein operates within aromatic compound metabolism; 3-phenylpropanoate degradation. Functionally, catalyzes the insertion of one atom of molecular oxygen into position 2 of the phenyl ring of 3-(3-hydroxyphenyl)propionate (3-HPP) and hydroxycinnamic acid (3HCI). This chain is 3-(3-hydroxy-phenyl)propionate/3-hydroxycinnamic acid hydroxylase, found in Klebsiella pneumoniae subsp. pneumoniae (strain ATCC 700721 / MGH 78578).